The sequence spans 590 residues: Glutamine--tRNA ligase (590 aa).

A 'HIGH' region motif is present at residues 55–65 (PEPNGYLHIGH). ATP is bound by residues 56-58 (EPN) and 62-68 (HIGHAKS). Residues Asp-93 and Tyr-238 each coordinate L-glutamine. ATP is bound by residues Thr-257 and 292–293 (RL). The short motif at 299–303 (ITSKR) is the 'KMSKS' region element.

It belongs to the class-I aminoacyl-tRNA synthetase family. As to quaternary structure, monomer.

The protein localises to the cytoplasm. The enzyme catalyses tRNA(Gln) + L-glutamine + ATP = L-glutaminyl-tRNA(Gln) + AMP + diphosphate. This is Glutamine--tRNA ligase from Polynucleobacter necessarius subsp. necessarius (strain STIR1).